A 1047-amino-acid polypeptide reads, in one-letter code: Ubiquitin carboxyl-terminal hydrolase 28 (1047 aa).

2 disordered regions span residues 60-95 and 110-138; these read DQEPVQNTAAAEPSSWEGSAVGKEPPQGGAAFDPEK and SPKAHAAERPQEVHSPEHKNRSKRKRCEV. Positions 94–113 constitute a UIM domain; sequence EKKGDVHSAVAYGQLESPKA. A compositionally biased stretch (basic and acidic residues) spans 111–128; sequence PKAHAAERPQEVHSPEHK. A USP domain is found at 156–651; the sequence is VGMKNIGNTC…SAYCLMYISD (496 aa). Cys-165 functions as the Nucleophile in the catalytic mechanism. Residues 461-486 show a composition bias toward polar residues; sequence STEDSQMMDRQSQGESLILGTPSQPD. Residues 461-528 form a disordered region; sequence STEDSQMMDR…SEPPAEMSDC (68 aa). Residues 489–498 are compositionally biased toward basic and acidic residues; the sequence is LDGKDGKPED. Residues 504–516 show a composition bias toward polar residues; it reads ANSSPQQQLNAPL. His-601 serves as the catalytic Proton acceptor. Residues 694 to 735 are disordered; the sequence is EAEEWEEEQSCKIPSTASESQELSPESGLDPPAAHEQSLRSL. The span at 705–717 shows a compositional bias: polar residues; it reads KIPSTASESQELS.

It belongs to the peptidase C19 family. USP28 subfamily.

Its subcellular location is the nucleus. It is found in the nucleoplasm. It carries out the reaction Thiol-dependent hydrolysis of ester, thioester, amide, peptide and isopeptide bonds formed by the C-terminal Gly of ubiquitin (a 76-residue protein attached to proteins as an intracellular targeting signal).. In terms of biological role, deubiquitinase involved in DNA damage response checkpoint and MYC proto-oncogene stability. Involved in DNA damage induced apoptosis by specifically deubiquitinating proteins of the DNA damage pathway such as CLSPN. Also involved in G2 DNA damage checkpoint, by deubiquitinating CLSPN, and preventing its degradation by the anaphase promoting complex/cyclosome (APC/C). Specifically deubiquitinates MYC in the nucleoplasm, leading to prevent MYC degradation by the proteasome. Deubiquitinates ZNF304, hence may prevent ZNF304 degradation by the proteasome, leading to the activated KRAS-mediated promoter hypermethylation and transcriptional silencing of tumor suppressor genes (TSGs). The sequence is that of Ubiquitin carboxyl-terminal hydrolase 28 (USP28) from Gallus gallus (Chicken).